The chain runs to 49 residues: Large ribosomal subunit protein bL32 (49 aa).

Belongs to the bacterial ribosomal protein bL32 family.

In Helicobacter hepaticus (strain ATCC 51449 / 3B1), this protein is Large ribosomal subunit protein bL32.